Here is a 54-residue protein sequence, read N- to C-terminus: UPF0391 membrane protein Tbd_2238 (54 aa).

2 consecutive transmembrane segments (helical) span residues 5–25 and 28–48; these read ALVF…GIAA and VGIA…TFVV.

This sequence belongs to the UPF0391 family.

The protein resides in the cell membrane. In Thiobacillus denitrificans (strain ATCC 25259 / T1), this protein is UPF0391 membrane protein Tbd_2238.